The following is a 216-amino-acid chain: Protein-L-isoaspartate O-methyltransferase (216 aa).

Ser-61 is a catalytic residue.

Belongs to the methyltransferase superfamily. L-isoaspartyl/D-aspartyl protein methyltransferase family.

It localises to the cytoplasm. It catalyses the reaction [protein]-L-isoaspartate + S-adenosyl-L-methionine = [protein]-L-isoaspartate alpha-methyl ester + S-adenosyl-L-homocysteine. Catalyzes the methyl esterification of L-isoaspartyl residues in peptides and proteins that result from spontaneous decomposition of normal L-aspartyl and L-asparaginyl residues. It plays a role in the repair and/or degradation of damaged proteins. The protein is Protein-L-isoaspartate O-methyltransferase (pcm) of Pyrococcus abyssi (strain GE5 / Orsay).